Here is a 62-residue protein sequence, read N- to C-terminus: Large ribosomal subunit protein bL33c (62 aa).

Belongs to the bacterial ribosomal protein bL33 family.

Its subcellular location is the plastid. It is found in the chloroplast. The chain is Large ribosomal subunit protein bL33c from Cyanidioschyzon merolae (strain NIES-3377 / 10D) (Unicellular red alga).